The following is a 651-amino-acid chain: Probable potassium transport system protein Kup (651 aa).

12 helical membrane passes run 41–61, 82–102, 130–150, 163–183, 194–214, 235–255, 276–296, 309–329, 366–386, 395–415, 426–446, and 450–470; these read LVLG…IYAF, VVSL…VLFV, LILG…VITP, IVAP…LVTL, VAIV…ASGL, FLMI…LAMT, WLWI…AFIL, MMPS…TVIA, IYIP…VLGF, AYGI…YIVM, ALPI…ANII, and EGGW…WTWV.

Belongs to the HAK/KUP transporter (TC 2.A.72) family.

Its subcellular location is the cell inner membrane. It catalyses the reaction K(+)(in) + H(+)(in) = K(+)(out) + H(+)(out). Functionally, transport of potassium into the cell. Likely operates as a K(+):H(+) symporter. This is Probable potassium transport system protein Kup from Brucella anthropi (strain ATCC 49188 / DSM 6882 / CCUG 24695 / JCM 21032 / LMG 3331 / NBRC 15819 / NCTC 12168 / Alc 37) (Ochrobactrum anthropi).